Here is a 671-residue protein sequence, read N- to C-terminus: Arginine--tRNA ligase (671 aa).

Residues 124 to 134 (PNVAKPMHVGH) carry the 'HIGH' region motif. Residues 223-254 (KSDAKTAKEVSDQSESDENLKPKDKKKLRKNA) form a disordered region. A compositionally biased stretch (basic and acidic residues) spans 224 to 233 (SDAKTAKEVS).

This sequence belongs to the class-I aminoacyl-tRNA synthetase family. Monomer.

Its subcellular location is the cytoplasm. It carries out the reaction tRNA(Arg) + L-arginine + ATP = L-arginyl-tRNA(Arg) + AMP + diphosphate. This Rhodopirellula baltica (strain DSM 10527 / NCIMB 13988 / SH1) protein is Arginine--tRNA ligase.